Reading from the N-terminus, the 508-residue chain is Photosystem II CP47 reaction center protein (508 aa).

The next 6 helical transmembrane spans lie at S21–S36, I101–W115, G140–F156, I203–S218, V237–V252, and S457–R472.

This sequence belongs to the PsbB/PsbC family. PsbB subfamily. In terms of assembly, PSII is composed of 1 copy each of membrane proteins PsbA, PsbB, PsbC, PsbD, PsbE, PsbF, PsbH, PsbI, PsbJ, PsbK, PsbL, PsbM, PsbT, PsbX, PsbY, PsbZ, Psb30/Ycf12, at least 3 peripheral proteins of the oxygen-evolving complex and a large number of cofactors. It forms dimeric complexes. The cofactor is Binds multiple chlorophylls. PSII binds additional chlorophylls, carotenoids and specific lipids..

It is found in the plastid. It localises to the chloroplast thylakoid membrane. In terms of biological role, one of the components of the core complex of photosystem II (PSII). It binds chlorophyll and helps catalyze the primary light-induced photochemical processes of PSII. PSII is a light-driven water:plastoquinone oxidoreductase, using light energy to abstract electrons from H(2)O, generating O(2) and a proton gradient subsequently used for ATP formation. The chain is Photosystem II CP47 reaction center protein from Olimarabidopsis pumila (Dwarf rocket).